The primary structure comprises 328 residues: Ribosomal RNA small subunit methyltransferase H (328 aa).

S-adenosyl-L-methionine is bound by residues 64 to 66, aspartate 83, phenylalanine 112, aspartate 129, and glutamine 136; that span reads GGH.

This sequence belongs to the methyltransferase superfamily. RsmH family.

It localises to the cytoplasm. The catalysed reaction is cytidine(1402) in 16S rRNA + S-adenosyl-L-methionine = N(4)-methylcytidine(1402) in 16S rRNA + S-adenosyl-L-homocysteine + H(+). Specifically methylates the N4 position of cytidine in position 1402 (C1402) of 16S rRNA. The polypeptide is Ribosomal RNA small subunit methyltransferase H (Bdellovibrio bacteriovorus (strain ATCC 15356 / DSM 50701 / NCIMB 9529 / HD100)).